A 253-amino-acid chain; its full sequence is MLTKRIIPCLDVHAGRVVKGVQFVNIIDAGDPVEAAAFYDKAGADELTFLDITASSDARSIMLDVVSRVAEQVFIPFTVGGGIRTAEDFRRILKAGADKVGVNSAALKRPELISEAAWKFGSQCVVLAIDAKKRADGSGWDTYLNGGRVNTGKDAVEWAIEAEKLGAGEILLTSMDKDGTKDGYDIELTRTVSENVKIPVIASGGAGKMEHFKDALVDGKADAVLAASLFHFREMEIRDLKGYLKNNGIEIRL.

Active-site residues include aspartate 11 and aspartate 130.

Belongs to the HisA/HisF family. In terms of assembly, heterodimer of HisH and HisF.

It localises to the cytoplasm. It catalyses the reaction 5-[(5-phospho-1-deoxy-D-ribulos-1-ylimino)methylamino]-1-(5-phospho-beta-D-ribosyl)imidazole-4-carboxamide + L-glutamine = D-erythro-1-(imidazol-4-yl)glycerol 3-phosphate + 5-amino-1-(5-phospho-beta-D-ribosyl)imidazole-4-carboxamide + L-glutamate + H(+). It participates in amino-acid biosynthesis; L-histidine biosynthesis; L-histidine from 5-phospho-alpha-D-ribose 1-diphosphate: step 5/9. Its function is as follows. IGPS catalyzes the conversion of PRFAR and glutamine to IGP, AICAR and glutamate. The HisF subunit catalyzes the cyclization activity that produces IGP and AICAR from PRFAR using the ammonia provided by the HisH subunit. This is Imidazole glycerol phosphate synthase subunit HisF from Ruminiclostridium cellulolyticum (strain ATCC 35319 / DSM 5812 / JCM 6584 / H10) (Clostridium cellulolyticum).